The sequence spans 149 residues: Large ribosomal subunit protein bL9 (149 aa).

It belongs to the bacterial ribosomal protein bL9 family. In terms of assembly, part of the 50S ribosomal subunit. In stalled/collided disomes (pairs of ribosomes where the leading ribosome is stalled and a second ribosome has collided with it), bL9 in the collided ribosome contacts bS6 and uL2, while it contacts only helices of the 16S rRNA in the stalled ribosome; the inter-ribosome bridge thus formed is different from that formed between normally translating ribosomes.

Its function is as follows. Binds to the 23S rRNA. This is Large ribosomal subunit protein bL9 from Bacillus subtilis (strain 168).